We begin with the raw amino-acid sequence, 292 residues long: Short chain dehydrogenase mpl6 (292 aa).

NADP(+) contacts are provided by valine 37, aspartate 95, asparagine 122, arginine 156, tyrosine 188, lysine 192, valine 221, and threonine 223. The Proton donor role is filled by tyrosine 188. Lysine 192 acts as the Lowers pKa of active site Tyr in catalysis.

Belongs to the short-chain dehydrogenases/reductases (SDR) family.

The protein operates within mycotoxin biosynthesis. Functionally, short chain dehydrogenase; part of the gene cluster that mediates the biosynthesis of the mycotoxin citrinin, a hepato-nephrotoxic compound to humans due to inhibition of respiration complex III. The pathway begins with the synthesis of a keto-aldehyde intermediate by the citrinin PKS (pksCT) from successive condensations of 4 malonyl-CoA units, presumably with a simple acetyl-CoA starter unit. Release of the keto-aldehyde intermediate is consistent with the presence of the C-terminal reductive release domain. Mp11 collaborates with pksCT by catalyzing the hydrolysis of ACP-bound acyl intermediates to free the ACP from stalled intermediates. Mpl2 then catalyzes the oxidation of the C-12 methyl of the ketone intermediate to an alcohol intermediate which is further oxidized by the oxidoreductase mpl7 to produce a bisaldehyde intermediate. The fourth catalytic step is catalyzed by the mpl4 aldehyde dehydrogenase. The final transformation is the reduction of C-3 by mpl6 to provide the chemically stable citrinin nucleus. This is Short chain dehydrogenase mpl6 from Monascus purpureus (Red mold).